The following is a 68-amino-acid chain: uncharacterized protein (68 aa).

To bacterial proteins yidD.

This is an uncharacterized protein from Haemophilus influenzae (Bacteriophage HP1).